The following is a 137-amino-acid chain: Ribosome-binding factor A (137 aa).

It belongs to the RbfA family. As to quaternary structure, monomer. Binds 30S ribosomal subunits, but not 50S ribosomal subunits or 70S ribosomes.

It localises to the cytoplasm. Functionally, one of several proteins that assist in the late maturation steps of the functional core of the 30S ribosomal subunit. Associates with free 30S ribosomal subunits (but not with 30S subunits that are part of 70S ribosomes or polysomes). Required for efficient processing of 16S rRNA. May interact with the 5'-terminal helix region of 16S rRNA. The polypeptide is Ribosome-binding factor A (Trichodesmium erythraeum (strain IMS101)).